Here is a 182-residue protein sequence, read N- to C-terminus: Isopentenyl-diphosphate Delta-isomerase (182 aa).

Mn(2+) is bound by residues H25 and H32. Residues 30–164 enclose the Nudix hydrolase domain; the sequence is LLHLAFSSWL…PWAFSPWMVM (135 aa). The active site involves C67. A Mn(2+)-binding site is contributed by H69. E87 provides a ligand contact to Mg(2+). Residues E114 and E116 each coordinate Mn(2+). E116 is a catalytic residue.

It belongs to the IPP isomerase type 1 family. As to quaternary structure, homodimer. Mg(2+) is required as a cofactor. The cofactor is Mn(2+).

It localises to the cytoplasm. The enzyme catalyses isopentenyl diphosphate = dimethylallyl diphosphate. Its pathway is isoprenoid biosynthesis; dimethylallyl diphosphate biosynthesis; dimethylallyl diphosphate from isopentenyl diphosphate: step 1/1. In terms of biological role, catalyzes the 1,3-allylic rearrangement of the homoallylic substrate isopentenyl (IPP) to its highly electrophilic allylic isomer, dimethylallyl diphosphate (DMAPP). This chain is Isopentenyl-diphosphate Delta-isomerase, found in Escherichia coli O127:H6 (strain E2348/69 / EPEC).